A 277-amino-acid polypeptide reads, in one-letter code: Phosphoenolpyruvate synthase regulatory protein (277 aa).

An ADP-binding site is contributed by 157-164 (GVSRCGKT).

This sequence belongs to the pyruvate, phosphate/water dikinase regulatory protein family. PSRP subfamily.

The enzyme catalyses [pyruvate, water dikinase] + ADP = [pyruvate, water dikinase]-phosphate + AMP + H(+). It carries out the reaction [pyruvate, water dikinase]-phosphate + phosphate + H(+) = [pyruvate, water dikinase] + diphosphate. Functionally, bifunctional serine/threonine kinase and phosphorylase involved in the regulation of the phosphoenolpyruvate synthase (PEPS) by catalyzing its phosphorylation/dephosphorylation. This chain is Phosphoenolpyruvate synthase regulatory protein, found in Escherichia coli O1:K1 / APEC.